Reading from the N-terminus, the 79-residue chain is ATP synthase subunit c (79 aa).

Transmembrane regions (helical) follow at residues 11–31 (IAAA…IGIL) and 53–73 (FFIV…LSLY).

Belongs to the ATPase C chain family. In terms of assembly, F-type ATPases have 2 components, F(1) - the catalytic core - and F(0) - the membrane proton channel. F(1) has five subunits: alpha(3), beta(3), gamma(1), delta(1), epsilon(1). F(0) has three main subunits: a(1), b(2) and c(10-14). The alpha and beta chains form an alternating ring which encloses part of the gamma chain. F(1) is attached to F(0) by a central stalk formed by the gamma and epsilon chains, while a peripheral stalk is formed by the delta and b chains.

The protein resides in the cell inner membrane. F(1)F(0) ATP synthase produces ATP from ADP in the presence of a proton or sodium gradient. F-type ATPases consist of two structural domains, F(1) containing the extramembraneous catalytic core and F(0) containing the membrane proton channel, linked together by a central stalk and a peripheral stalk. During catalysis, ATP synthesis in the catalytic domain of F(1) is coupled via a rotary mechanism of the central stalk subunits to proton translocation. Its function is as follows. Key component of the F(0) channel; it plays a direct role in translocation across the membrane. A homomeric c-ring of between 10-14 subunits forms the central stalk rotor element with the F(1) delta and epsilon subunits. The protein is ATP synthase subunit c of Blochmanniella floridana.